The primary structure comprises 461 residues: Bifunctional protein GlmU (461 aa).

The segment at 1–229 is pyrophosphorylase; that stretch reads MEKYVVVLAA…FSESLGVNDR (229 aa). UDP-N-acetyl-alpha-D-glucosamine contacts are provided by residues 8–11, lysine 22, glutamine 72, and 77–78; these read LAAG and GT. Aspartate 102 lines the Mg(2+) pocket. UDP-N-acetyl-alpha-D-glucosamine contacts are provided by glycine 139, glutamate 154, asparagine 169, and asparagine 227. Asparagine 227 serves as a coordination point for Mg(2+). The interval 230–250 is linker; it reads IALAEATRIMQRRINEGHMRD. The segment at 251-461 is N-acetyltransferase; that stretch reads GVTFIDPATA…LPLSEDEEWK (211 aa). Residues arginine 332 and lysine 350 each contribute to the UDP-N-acetyl-alpha-D-glucosamine site. Histidine 362 functions as the Proton acceptor in the catalytic mechanism. 2 residues coordinate UDP-N-acetyl-alpha-D-glucosamine: tyrosine 365 and asparagine 376. Positions 422 and 439 each coordinate acetyl-CoA.

The protein in the N-terminal section; belongs to the N-acetylglucosamine-1-phosphate uridyltransferase family. In the C-terminal section; belongs to the transferase hexapeptide repeat family. As to quaternary structure, homotrimer. Requires Mg(2+) as cofactor.

It localises to the cytoplasm. The catalysed reaction is alpha-D-glucosamine 1-phosphate + acetyl-CoA = N-acetyl-alpha-D-glucosamine 1-phosphate + CoA + H(+). It catalyses the reaction N-acetyl-alpha-D-glucosamine 1-phosphate + UTP + H(+) = UDP-N-acetyl-alpha-D-glucosamine + diphosphate. It participates in nucleotide-sugar biosynthesis; UDP-N-acetyl-alpha-D-glucosamine biosynthesis; N-acetyl-alpha-D-glucosamine 1-phosphate from alpha-D-glucosamine 6-phosphate (route II): step 2/2. Its pathway is nucleotide-sugar biosynthesis; UDP-N-acetyl-alpha-D-glucosamine biosynthesis; UDP-N-acetyl-alpha-D-glucosamine from N-acetyl-alpha-D-glucosamine 1-phosphate: step 1/1. The protein operates within bacterial outer membrane biogenesis; LPS lipid A biosynthesis. Catalyzes the last two sequential reactions in the de novo biosynthetic pathway for UDP-N-acetylglucosamine (UDP-GlcNAc). The C-terminal domain catalyzes the transfer of acetyl group from acetyl coenzyme A to glucosamine-1-phosphate (GlcN-1-P) to produce N-acetylglucosamine-1-phosphate (GlcNAc-1-P), which is converted into UDP-GlcNAc by the transfer of uridine 5-monophosphate (from uridine 5-triphosphate), a reaction catalyzed by the N-terminal domain. In Lactobacillus delbrueckii subsp. bulgaricus (strain ATCC 11842 / DSM 20081 / BCRC 10696 / JCM 1002 / NBRC 13953 / NCIMB 11778 / NCTC 12712 / WDCM 00102 / Lb 14), this protein is Bifunctional protein GlmU.